The following is a 296-amino-acid chain: Thioredoxin-related transmembrane protein 2 (296 aa).

A signal peptide spans 1 to 48; the sequence is MAVLAPLIALVYSVPRLSRWLAQPYYLLSALLSAAFLLVRKLPPLCHG. Residues 49 to 102 are Extracellular-facing; the sequence is LPTQREDGNPCDFDWREVEILMFLSAIVMMKNRRSITVEQHIGNIFMFSKVANA. The helical transmembrane segment at 103-125 threads the bilayer; sequence ILFFRLDIRMGLLYITLCIVFLM. Residues 114 to 269 enclose the Thioredoxin domain; that stretch reads LLYITLCIVF…LYQRAKKLSK (156 aa). The Cytoplasmic segment spans residues 126–296; it reads TCKPPLYMGP…VSDGESKKDK (171 aa). A phosphoserine mark is found at serine 211, serine 243, and serine 288. Residues 269-296 form a disordered region; it reads KAGDNIPEEQPVAPTPTRVSDGESKKDK. Residues 293–296 carry the Di-lysine motif motif; sequence KKDK.

In terms of assembly, monomer. Homodimer; disulfide-linked. Occurs in both reduced and oxidized monomeric form. Oxidative conditions increase homodimerization. Interacts with CANX. Interacts with ATP2A2.

The protein resides in the endoplasmic reticulum membrane. It localises to the mitochondrion membrane. Its function is as follows. Endoplasmic reticulum and mitochondria-associated protein that probably functions as a regulator of cellular redox state and thereby regulates protein post-translational modification, protein folding and mitochondrial activity. Indirectly regulates neuronal proliferation, migration, and organization in the developing brain. The protein is Thioredoxin-related transmembrane protein 2 (TMX2) of Macaca fascicularis (Crab-eating macaque).